Consider the following 262-residue polypeptide: Acetaldehyde dehydrogenase 7 (262 aa).

Ser10–Ile13 contributes to the NAD(+) binding site. The active-site Acyl-thioester intermediate is Cys128. NAD(+) is bound at residue Ser159–Asn167.

This sequence belongs to the acetaldehyde dehydrogenase family.

The enzyme catalyses acetaldehyde + NAD(+) + CoA = acetyl-CoA + NADH + H(+). This is Acetaldehyde dehydrogenase 7 from Rhodococcus jostii (strain RHA1).